Consider the following 550-residue polypeptide: Chaperonin GroEL (550 aa).

Residues 30–33, Lys-51, 87–91, Gly-415, and Asp-496 contribute to the ATP site; these read TLGP and DGTTT.

It belongs to the chaperonin (HSP60) family. As to quaternary structure, forms a cylinder of 14 subunits composed of two heptameric rings stacked back-to-back. Interacts with the co-chaperonin GroES.

Its subcellular location is the cytoplasm. It catalyses the reaction ATP + H2O + a folded polypeptide = ADP + phosphate + an unfolded polypeptide.. Together with its co-chaperonin GroES, plays an essential role in assisting protein folding. The GroEL-GroES system forms a nano-cage that allows encapsulation of the non-native substrate proteins and provides a physical environment optimized to promote and accelerate protein folding. In Rickettsia prowazekii (strain Madrid E), this protein is Chaperonin GroEL.